Reading from the N-terminus, the 240-residue chain is Terpene cyclase cdmG (240 aa).

Helical transmembrane passes span 16–36, 48–68, 78–98, 112–132, 134–154, and 167–187; these read YASI…LNYG, YGMA…YTVI, IIMT…IKFA, IPFI…ALAA, VGPG…LTIG, and GVSY…VICV. Asn-197 carries N-linked (GlcNAc...) asparagine glycosylation. A helical membrane pass occupies residues 205–225; sequence IMKCFSGISLAVEIVYGVTLW.

The protein belongs to the paxB family.

The protein localises to the membrane. The enzyme catalyses verruculide C epoxide = 3-hydroxypentacecilide A. It functions in the pathway secondary metabolite biosynthesis; terpenoid biosynthesis. Terpene cyclase; part of the gene cluster that mediates the biosynthesis of chrodrimanin B, a meroterpenoid that acts as a potent blocker of insect GABA-gated chloride channels. The first step of the pathway is the biosynthesis of 6-hydroxymellein by the polyketide synthase cdmE. The prenyltransferase cdmH acts as a 6-hydroxymellein 5-farnesyltransferase and produces the hydrophobic metabolite verruculide C. The FAD-dependent monooxygenase cdmI further converts verruculide C into verruculide B. The terpene cyclase cdmG then produced the pentacyclic molecule 3-hydroxypentacecilide A, the backbone structure of chrodrimanin B, via folding the farnesyl moiety of the substrate into the chair-boat conformation. The short-chain dehydrogenase/reductase cdmF functions as the 3-OH dehydrogenase that oxidizes the C-3 hydroxyl group of 3-hydroxypentacecilide A and produces chrodrimanin C, the dehydrogenated product of 3-hydroxypentacecilide A. The cytochrome P450 monooxygenase cdmJ then accepts both 3-hydroxypentacecilide A and chrodrimanin C and functions as a C-7-beta-hydroxylase to produce respectively chrodrimanin H and chrodrimanin F. The dioxygenase cdmA accepts chrodrimanin H to afford chrodrimanin E, which is further transformed to chrodrimanin A by the dioxygenase cdmD. CdmA can also accept chrodrimanin C as substrate to convert it into verruculide A, which is further converted into chrodrimanin T by cdmD. The last step of the biosynthesis is proposed to be performed by the acetyltransferase cdmC which acetylates chrodrimanin A to yield chrodrimanin B. The pathway may also lead to the production of additional shunt products, including chrodrimanins T and U. The protein is Terpene cyclase cdmG of Talaromyces verruculosus (Penicillium verruculosum).